A 161-amino-acid polypeptide reads, in one-letter code: Cyclic pyranopterin monophosphate synthase (161 aa).

Residues 75 to 77 and 115 to 116 each bind substrate; these read MCH and ME. Aspartate 130 is a catalytic residue.

It belongs to the MoaC family. Homohexamer; trimer of dimers.

The catalysed reaction is (8S)-3',8-cyclo-7,8-dihydroguanosine 5'-triphosphate = cyclic pyranopterin phosphate + diphosphate. The protein operates within cofactor biosynthesis; molybdopterin biosynthesis. In terms of biological role, catalyzes the conversion of (8S)-3',8-cyclo-7,8-dihydroguanosine 5'-triphosphate to cyclic pyranopterin monophosphate (cPMP). This is Cyclic pyranopterin monophosphate synthase from Bacillus thuringiensis subsp. konkukian (strain 97-27).